A 316-amino-acid chain; its full sequence is Acetyl-coenzyme A carboxylase carboxyl transferase subunit alpha (316 aa).

Residues 39–293 (KLEEKNAQLT…KKHLQANLTN (255 aa)) enclose the CoA carboxyltransferase C-terminal domain.

This sequence belongs to the AccA family. In terms of assembly, acetyl-CoA carboxylase is a heterohexamer composed of biotin carboxyl carrier protein (AccB), biotin carboxylase (AccC) and two subunits each of ACCase subunit alpha (AccA) and ACCase subunit beta (AccD).

It localises to the cytoplasm. The catalysed reaction is N(6)-carboxybiotinyl-L-lysyl-[protein] + acetyl-CoA = N(6)-biotinyl-L-lysyl-[protein] + malonyl-CoA. Its pathway is lipid metabolism; malonyl-CoA biosynthesis; malonyl-CoA from acetyl-CoA: step 1/1. In terms of biological role, component of the acetyl coenzyme A carboxylase (ACC) complex. First, biotin carboxylase catalyzes the carboxylation of biotin on its carrier protein (BCCP) and then the CO(2) group is transferred by the carboxyltransferase to acetyl-CoA to form malonyl-CoA. The sequence is that of Acetyl-coenzyme A carboxylase carboxyl transferase subunit alpha from Coxiella burnetii (strain CbuK_Q154) (Coxiella burnetii (strain Q154)).